The sequence spans 1631 residues: ALK tyrosine kinase receptor (1631 aa).

The first 18 residues, 1 to 18 (MGSVGLLGLLLLRLSVTA), serve as a signal peptide directing secretion. Residues 19-1053 (SGSGAGTGSG…PHLPLSLVLS (1035 aa)) are Extracellular-facing. The disordered stretch occupies residues 20 to 53 (GSGAGTGSGTGSGTGTGTGQLVGSPATGPALQPR). A compositionally biased stretch (gly residues) spans 21-39 (SGAGTGSGTGSGTGTGTGQ). The interval 60–82 (RLQRKSLAVDFVVPSLFRVYARD) is heparin-binding region. 10 N-linked (GlcNAc...) asparagine glycosylation sites follow: Asn185, Asn260, Asn301, Asn340, Asn427, Asn440, Asn461, Asn579, Asn587, and Asn643. The MAM 1 domain maps to 280 to 443 (LECSFDFPCE…DFFALKNCSE (164 aa)). Residues 494–652 (FYCNFENGFC…NISISLDCYL (159 aa)) form the MAM 2 domain. A disulfide bond links Cys703 and Cys716. An N-linked (GlcNAc...) asparagine glycan is attached at Asn724. Cys798 and Cys809 are joined by a disulfide. N-linked (GlcNAc...) asparagine glycans are attached at residues Asn823, Asn878, Asn879, and Asn901. Cys921 and Cys943 are oxidised to a cystine. Asn1001 is a glycosylation site (N-linked (GlcNAc...) asparagine). 3 cysteine pairs are disulfide-bonded: Cys1002–Cys1010, Cys1005–Cys1021, and Cys1023–Cys1036. The EGF-like stretch occupies residues 1002 to 1040 (CSHCEGDECHMDPESHKVICFCDHGTVLAEDGVSCIVSP). Residues 1054–1074 (VVTSALVAALVLAFSGIMIVY) form a helical membrane-spanning segment. The Cytoplasmic portion of the chain corresponds to 1075-1631 (RRKHQELQAM…DALLKTPPGP (557 aa)). Positions 1131-1407 (ITLIRGLGHG…IEYCTQDPDV (277 aa)) constitute a Protein kinase domain. ATP-binding positions include 1137–1145 (LGHGAFGEV) and Lys1165. The active-site Proton acceptor is Asp1264. 3 disordered regions span residues 1423 to 1493 (EEKV…GHVN), 1526 to 1554 (WFTEKPTKKNNPPATKGHHDRGNLGREGS), and 1609 to 1631 (FEGTTAPGSSQYEDALLKTPPGP).

As to quaternary structure, homodimer; homodimerizes following heparin- and ligand-binding. Interacts with CBL, IRS1, PIK3R1 and PLCG1. Interacts with FRS2 and SHC1. Interacts with PTN and MDK. Post-translationally, phosphorylated at tyrosine residues by autocatalysis, which activates kinase activity. In cells not stimulated by a ligand, receptor protein tyrosine phosphatase beta and zeta complex (PTPRB/PTPRZ1) dephosphorylates ALK at the sites in ALK that are undergoing autophosphorylation through autoactivation.

It is found in the cell membrane. It carries out the reaction L-tyrosyl-[protein] + ATP = O-phospho-L-tyrosyl-[protein] + ADP + H(+). With respect to regulation, activated upon ALKAL2 ligand-binding. ALKAL2-driven activation is coupled with heparin-binding. Following ligand-binding, homodimerizes and autophosphorylates, activating its kinase activity. Inactivated through dephosphorylation by receptor protein tyrosine phosphatase beta and zeta complex (PTPRB/PTPRZ1) when there is no stimulation by a ligand. Neuronal receptor tyrosine kinase that is essentially and transiently expressed in specific regions of the central and peripheral nervous systems and plays an important role in the genesis and differentiation of the nervous system. Also acts as a key thinness protein involved in the resistance to weight gain: in hypothalamic neurons, controls energy expenditure acting as a negative regulator of white adipose tissue lipolysis and sympathetic tone to fine-tune energy homeostasis. Following activation by ALKAL2 ligand at the cell surface, transduces an extracellular signal into an intracellular response. In contrast, ALKAL1 is not a potent physiological ligand for ALK. Ligand-binding to the extracellular domain induces tyrosine kinase activation, leading to activation of the mitogen-activated protein kinase (MAPK) pathway. Phosphorylates almost exclusively at the first tyrosine of the Y-x-x-x-Y-Y motif. Induces tyrosine phosphorylation of CBL, FRS2, IRS1 and SHC1, as well as of the MAP kinases MAPK1/ERK2 and MAPK3/ERK1. ALK activation may also be regulated by pleiotrophin (PTN) and midkine (MDK). PTN-binding induces MAPK pathway activation, which is important for the anti-apoptotic signaling of PTN and regulation of cell proliferation. MDK-binding induces phosphorylation of the ALK target insulin receptor substrate (IRS1), activates mitogen-activated protein kinases (MAPKs) and PI3-kinase, resulting also in cell proliferation induction. Drives NF-kappa-B activation, probably through IRS1 and the activation of the AKT serine/threonine kinase. Recruitment of IRS1 to activated ALK and the activation of NF-kappa-B are essential for the autocrine growth and survival signaling of MDK. This is ALK tyrosine kinase receptor from Canis lupus familiaris (Dog).